A 1888-amino-acid chain; its full sequence is Fatty acid synthase subunit alpha (1888 aa).

The segment at 98–118 is disordered; that stretch reads DLAPVEEPNAEEQTGAAATPA. In terms of domain architecture, Carrier spans 146-221; it reads VKASLLLHVL…ETFQDTFAGS (76 aa). An O-(pantetheine 4'-phosphoryl)serine modification is found at Ser-181. The tract at residues 675–874 is beta-ketoacyl reductase; it reads DKYVLITGAG…CGAIIGWTRG (200 aa). The 539-residue stretch at 1119-1657 folds into the Ketosynthase family 3 (KS3) domain; the sequence is KQMIQEVVIE…QKGAQAVAVH (539 aa). Catalysis depends on for beta-ketoacyl synthase activity residues Cys-1305, His-1542, and His-1583. Residues Asp-1774, Val-1775, and Glu-1776 each coordinate Mg(2+). Acetyl-CoA-binding positions include 1774–1776, Tyr-1800, Ser-1810, 1819–1829, 1843–1846, and 1873–1875; these read DVE, EAVFKSLGVKS, REAG, and ISH. 2 residues coordinate Mg(2+): Ser-1874 and His-1875.

Belongs to the thiolase-like superfamily. Fungal fatty acid synthetase subunit alpha family. In terms of assembly, fatty acid synthase is composed of alpha and beta subunits.

The enzyme catalyses acetyl-CoA + n malonyl-CoA + 2n NADPH + 4n H(+) = a long-chain-acyl-CoA + n CoA + n CO2 + 2n NADP(+).. The catalysed reaction is a fatty acyl-[ACP] + malonyl-[ACP] + H(+) = a 3-oxoacyl-[ACP] + holo-[ACP] + CO2. It carries out the reaction a (3R)-hydroxyacyl-[ACP] + NADP(+) = a 3-oxoacyl-[ACP] + NADPH + H(+). Functionally, fatty acid synthetase catalyzes the formation of long-chain fatty acids from acetyl-CoA, malonyl-CoA and NADPH. The alpha subunit contains domains for: acyl carrier protein, 3-oxoacyl-[acyl-carrier-protein] reductase, and 3-oxoacyl-[acyl-carrier-protein] synthase. In this species, higher amounts of C18 than C16 fatty acids are produced. In Lachancea kluyveri (Yeast), this protein is Fatty acid synthase subunit alpha (FAS2).